We begin with the raw amino-acid sequence, 381 residues long: Carbamoyl phosphate synthase small chain (381 aa).

Positions 1–192 are CPSase; the sequence is MSKPAILALE…SGYADVSQGD (192 aa). L-glutamine is bound by residues Ser47, Gly244, and Gly246. Residues 196–381 form the Glutamine amidotransferase type-1 domain; sequence HVVAYDYGMK…RFVEMMRHRR (186 aa). Cys272 acts as the Nucleophile in catalysis. The L-glutamine site is built by Leu273, Gln276, Asn314, Gly316, and Phe317. Active-site residues include His356 and Glu358.

It belongs to the CarA family. As to quaternary structure, composed of two chains; the small (or glutamine) chain promotes the hydrolysis of glutamine to ammonia, which is used by the large (or ammonia) chain to synthesize carbamoyl phosphate. Tetramer of heterodimers (alpha,beta)4.

It catalyses the reaction hydrogencarbonate + L-glutamine + 2 ATP + H2O = carbamoyl phosphate + L-glutamate + 2 ADP + phosphate + 2 H(+). The enzyme catalyses L-glutamine + H2O = L-glutamate + NH4(+). It functions in the pathway amino-acid biosynthesis; L-arginine biosynthesis; carbamoyl phosphate from bicarbonate: step 1/1. The protein operates within pyrimidine metabolism; UMP biosynthesis via de novo pathway; (S)-dihydroorotate from bicarbonate: step 1/3. Small subunit of the glutamine-dependent carbamoyl phosphate synthetase (CPSase). CPSase catalyzes the formation of carbamoyl phosphate from the ammonia moiety of glutamine, carbonate, and phosphate donated by ATP, constituting the first step of 2 biosynthetic pathways, one leading to arginine and/or urea and the other to pyrimidine nucleotides. The small subunit (glutamine amidotransferase) binds and cleaves glutamine to supply the large subunit with the substrate ammonia. This Halomonas eurihalina protein is Carbamoyl phosphate synthase small chain.